The chain runs to 101 residues: Large ribosomal subunit protein uL24 (101 aa).

It belongs to the universal ribosomal protein uL24 family. Part of the 50S ribosomal subunit.

One of two assembly initiator proteins, it binds directly to the 5'-end of the 23S rRNA, where it nucleates assembly of the 50S subunit. Its function is as follows. One of the proteins that surrounds the polypeptide exit tunnel on the outside of the subunit. The chain is Large ribosomal subunit protein uL24 from Streptococcus equi subsp. zooepidemicus (strain H70).